A 207-amino-acid polypeptide reads, in one-letter code: CASP-like protein F16 (207 aa).

A disordered region spans residues 1-30 (MEKSEKGNGVAPATRSPMALMGSSRNENQE). Residues 1 to 37 (MEKSEKGNGVAPATRSPMALMGSSRNENQEVNTSMRT) are Cytoplasmic-facing. A helical membrane pass occupies residues 38–58 (AETMLRLVPMALGVAALVVML). Over 59 to 79 (KNSQSNDFGSVSYSDLGAFRY) the chain is Extracellular. A helical membrane pass occupies residues 80 to 100 (LVHANGICAGYSLLSAIIAAV). Residues 101 to 108 (PSPSTMPR) lie on the Cytoplasmic side of the membrane. A helical transmembrane segment spans residues 109-129 (AWTFFLLDQILTYVILGAAAV). The Extracellular portion of the chain corresponds to 130-159 (STEVLYLANKGDSAITWSAACGTFAGFCHK). A helical membrane pass occupies residues 160 to 180 (ATIAVVITFVAVICYAVLSLV). The Cytoplasmic segment spans residues 181-207 (SSYRLFTKFDAPVNYPSKTIEATVFHG).

Belongs to the Casparian strip membrane proteins (CASP) family. Homodimer and heterodimers.

Its subcellular location is the cell membrane. The polypeptide is CASP-like protein F16 (F16) (Gossypium hirsutum (Upland cotton)).